We begin with the raw amino-acid sequence, 299 residues long: 4-diphosphocytidyl-2-C-methyl-D-erythritol kinase (299 aa).

Residue Lys-17 is part of the active site. 103–113 contacts ATP; that stretch reads PVASGIGGGSG. Asp-145 is a catalytic residue.

Belongs to the GHMP kinase family. IspE subfamily.

The catalysed reaction is 4-CDP-2-C-methyl-D-erythritol + ATP = 4-CDP-2-C-methyl-D-erythritol 2-phosphate + ADP + H(+). It functions in the pathway isoprenoid biosynthesis; isopentenyl diphosphate biosynthesis via DXP pathway; isopentenyl diphosphate from 1-deoxy-D-xylulose 5-phosphate: step 3/6. In terms of biological role, catalyzes the phosphorylation of the position 2 hydroxy group of 4-diphosphocytidyl-2C-methyl-D-erythritol. This chain is 4-diphosphocytidyl-2-C-methyl-D-erythritol kinase, found in Bartonella tribocorum (strain CIP 105476 / IBS 506).